The following is a 308-amino-acid chain: Aspartate carbamoyltransferase catalytic subunit (308 aa).

Residues R57 and T58 each contribute to the carbamoyl phosphate site. K86 provides a ligand contact to L-aspartate. The carbamoyl phosphate site is built by R107, H135, and Q138. The L-aspartate site is built by R168 and R229. Carbamoyl phosphate-binding residues include L268 and P269.

This sequence belongs to the aspartate/ornithine carbamoyltransferase superfamily. ATCase family. In terms of assembly, heterooligomer of catalytic and regulatory chains.

It catalyses the reaction carbamoyl phosphate + L-aspartate = N-carbamoyl-L-aspartate + phosphate + H(+). It participates in pyrimidine metabolism; UMP biosynthesis via de novo pathway; (S)-dihydroorotate from bicarbonate: step 2/3. Catalyzes the condensation of carbamoyl phosphate and aspartate to form carbamoyl aspartate and inorganic phosphate, the committed step in the de novo pyrimidine nucleotide biosynthesis pathway. The sequence is that of Aspartate carbamoyltransferase catalytic subunit from Pyrococcus horikoshii (strain ATCC 700860 / DSM 12428 / JCM 9974 / NBRC 100139 / OT-3).